The chain runs to 731 residues: Nucleolar GTP-binding protein 2 (731 aa).

Methionine 1 carries the post-translational modification N-acetylmethionine. The tract at residues 1-33 (MVKPKYKGRSTINPSKASTNPDRVQGAGGQNMR) is disordered. The segment covering 10 to 22 (STINPSKASTNPD) has biased composition (polar residues). The region spanning 207–368 (WGELYKVIDS…LIDCPGVVYP (162 aa)) is the CP-type G domain. GTP-binding positions include 317–324 (GYPNVGKS) and 361–365 (DCPGV). The segment at 481-502 (VVPEAAQNNPGEEVTETAGEGS) is disordered. Phosphoserine is present on serine 504. Residues 555 to 589 (LEEELESFSDEEEEEQEQQRDDAEESSSEPEEENV) are compositionally biased toward acidic residues. 2 disordered regions span residues 555–594 (LEEE…NDTK) and 630–731 (EKIF…RQKQ). Composition is skewed to basic and acidic residues over residues 630–652 (EKIF…DRAP) and 662–671 (QREEEQEHSN). 2 stretches are compositionally biased toward basic residues: residues 681-695 (ERRR…KKVG) and 721-731 (KHKRKKFRQKQ).

The protein belongs to the TRAFAC class YlqF/YawG GTPase family. NOG2 subfamily. In terms of assembly, interacts with LYAR and RPL23A. Interacts with the nuclear importin-beta receptor and, at a lower extent, with importin-alpha. Widely expressed, with the highest expression level in testis.

Its subcellular location is the nucleus. The protein localises to the nucleolus. GTPase that associates with pre-60S ribosomal subunits in the nucleolus and is required for their nuclear export and maturation. May promote cell proliferation possibly by increasing p53/TP53 protein levels, and consequently those of its downstream product CDKN1A/p21, and decreasing RPL23A protein levels. The sequence is that of Nucleolar GTP-binding protein 2 (GNL2) from Homo sapiens (Human).